The following is a 380-amino-acid chain: Mitogen-activated protein kinase 3 (380 aa).

Position 2 is an N-acetylalanine (A2). The Protein kinase domain maps to 43-331 (YTQLQYIGEG…VEEALAHPYL (289 aa)). Residues 49 to 57 (IGEGAYGMV) and K72 contribute to the ATP site. The active-site Proton acceptor is D167. At T199 the chain carries Phosphothreonine. T203 carries the phosphothreonine; by MAP2K1 and MAP2K2 modification. The TXY motif lies at 203-205 (TEY). Phosphotyrosine; by MAP2K1 and MAP2K2 is present on Y205. A Phosphothreonine; by autocatalysis modification is found at T208.

It belongs to the protein kinase superfamily. CMGC Ser/Thr protein kinase family. MAP kinase subfamily. In terms of assembly, binds both upstream activators and downstream substrates in multimolecular complexes. Found in a complex with at least BRAF, HRAS, MAP2K1/MEK1, MAPK3 and RGS14. Interacts with ADAM15, ARRB2, CANX, DAPK1 (via death domain), HSF4, IER3, MAP2K1/MEK1, MORG1, NISCH, PEA15, SGK1 and MKNK2. MKNK2 isoform 1 binding prevents from dephosphorylation and inactivation. Interacts with TPR. Interacts with HSF1 (via D domain and preferentially with hyperphosphorylated form); this interaction occurs upon heat shock. Interacts with CDKN2AIP. Interacts with CAVIN4. Interacts with GIT1; this interaction is necessary for MAPK3 localization to focal adhesions. Interacts with ZNF263. Interacts with EBF4. Mg(2+) is required as a cofactor. In terms of processing, phosphorylated upon FLT3 and KIT signaling. Ligand-activated ALK induces tyrosine phosphorylation. Dephosphorylated by PTPRJ at Tyr-205. Dually phosphorylated on Thr-203 and Tyr-205, which activates the enzyme. Ubiquitinated by TRIM15 via 'Lys-63'-linked ubiquitination; leading to activation. Deubiquitinated by CYLD. As to expression, highest levels within the nervous system, expressed in different tissues, mostly in intestine, placenta and lung.

It localises to the cytoplasm. The protein resides in the nucleus. It is found in the membrane. The protein localises to the caveola. Its subcellular location is the cell junction. It localises to the focal adhesion. The catalysed reaction is L-seryl-[protein] + ATP = O-phospho-L-seryl-[protein] + ADP + H(+). It catalyses the reaction L-threonyl-[protein] + ATP = O-phospho-L-threonyl-[protein] + ADP + H(+). Phosphorylated by MAP2K1/MEK1 and MAP2K2/MEK2 on Thr-203 and Tyr-205 in response to external stimuli like insulin or NGF. Both phosphorylations are required for activity. This phosphorylation causes dramatic conformational changes, which enable full activation and interaction of MAPK1/ERK2 with its substrates. Dephosphorylated and inactivated by DUSP3, DUSP6 and DUSP9. Its function is as follows. Serine/threonine kinase which acts as an essential component of the MAP kinase signal transduction pathway. MAPK1/ERK2 and MAPK3/ERK1 are the 2 MAPKs which play an important role in the MAPK/ERK cascade. They participate also in a signaling cascade initiated by activated KIT and KITLG/SCF. Depending on the cellular context, the MAPK/ERK cascade mediates diverse biological functions such as cell growth, adhesion, survival and differentiation through the regulation of transcription, translation, cytoskeletal rearrangements. The MAPK/ERK cascade also plays a role in initiation and regulation of meiosis, mitosis, and postmitotic functions in differentiated cells by phosphorylating a number of transcription factors. About 160 substrates have already been discovered for ERKs. Many of these substrates are localized in the nucleus, and seem to participate in the regulation of transcription upon stimulation. However, other substrates are found in the cytosol as well as in other cellular organelles, and those are responsible for processes such as translation, mitosis and apoptosis. Moreover, the MAPK/ERK cascade is also involved in the regulation of the endosomal dynamics, including lysosome processing and endosome cycling through the perinuclear recycling compartment (PNRC); as well as in the fragmentation of the Golgi apparatus during mitosis. The substrates include transcription factors (such as ATF2, BCL6, ELK1, ERF, FOS, HSF4 or SPZ1), cytoskeletal elements (such as CANX, CTTN, GJA1, MAP2, MAPT, PXN, SORBS3 or STMN1), regulators of apoptosis (such as BAD, BTG2, CASP9, DAPK1, IER3, MCL1 or PPARG), regulators of translation (such as EIF4EBP1) and a variety of other signaling-related molecules (like ARHGEF2, DEPTOR, FRS2 or GRB10). Protein kinases (such as RAF1, RPS6KA1/RSK1, RPS6KA3/RSK2, RPS6KA2/RSK3, RPS6KA6/RSK4, SYK, MKNK1/MNK1, MKNK2/MNK2, RPS6KA5/MSK1, RPS6KA4/MSK2, MAPKAPK3 or MAPKAPK5) and phosphatases (such as DUSP1, DUSP4, DUSP6 or DUSP16) are other substrates which enable the propagation the MAPK/ERK signal to additional cytosolic and nuclear targets, thereby extending the specificity of the cascade. The polypeptide is Mitogen-activated protein kinase 3 (Mapk3) (Rattus norvegicus (Rat)).